A 718-amino-acid polypeptide reads, in one-letter code: Kelch-like protein 4 (718 aa).

The tract at residues T46–V69 is disordered. The BTB domain occupies C182–E249. 6 Kelch repeats span residues A430–N476, K477–G523, M525–N570, K571–G617, L619–D670, and K671–L717.

Expressed in adult fibroblasts and in a range of fetal tissues including tongue, palate, and mandible.

It is found in the cytoplasm. The protein resides in the cytoskeleton. This is Kelch-like protein 4 (KLHL4) from Homo sapiens (Human).